The chain runs to 427 residues: Trigger factor (427 aa).

In terms of domain architecture, PPIase FKBP-type spans 163–248 (GDTVVIDFVG…IHEVKAKEVP (86 aa)).

This sequence belongs to the FKBP-type PPIase family. Tig subfamily.

It localises to the cytoplasm. The enzyme catalyses [protein]-peptidylproline (omega=180) = [protein]-peptidylproline (omega=0). Functionally, involved in protein export. Acts as a chaperone by maintaining the newly synthesized protein in an open conformation. Functions as a peptidyl-prolyl cis-trans isomerase. This chain is Trigger factor, found in Streptococcus pneumoniae serotype 2 (strain D39 / NCTC 7466).